A 262-amino-acid chain; its full sequence is 3-dehydro-D-guloside 4-epimerase (262 aa).

The active-site Proton donor/acceptor is the Glu-146. Residues Glu-146 and Asp-179 each contribute to the Mn(2+) site. Residue His-182 coordinates substrate. His-205 contributes to the Mn(2+) binding site. Position 211 (Arg-211) interacts with substrate. The active-site Proton donor/acceptor is the Glu-240. Glu-240 is a binding site for Mn(2+).

This sequence belongs to the hyi family. It depends on Mn(2+) as a cofactor.

It catalyses the reaction a 3-dehydro-D-guloside = a 3-dehydro-D-glucoside. Catalyzes the epimerization at C4 of 3-dehydro-D-gulosides leading to 3-dehydro-D-glucosides. Probably functions in a metabolic pathway that transforms D-gulosides to D-glucosides. Can use methyl alpha-3-dehydro-D-glucoside and methyl beta-3-dehydro-D-glucoside as substrates in vitro. However, the actual specific physiological substrates for this metabolic pathway are unknown. Cannot act on D-psicose, D-fructose, D-tagatose, D-sorbose, L-xylulose, or L-ribulose. In Escherichia coli (strain K12), this protein is 3-dehydro-D-guloside 4-epimerase (ycjR).